Reading from the N-terminus, the 330-residue chain is Transcription factor TGA6 (330 aa).

Over residues 1-13 (MADTSSRTDVSTD) the composition is skewed to polar residues. Residues 1 to 45 (MADTSSRTDVSTDGDTDHRDLGSDRGHMHAAASDSSDRSKDKLDQ) are disordered. Composition is skewed to basic and acidic residues over residues 15–27 (DTDH…DRGH) and 35–45 (SSDRSKDKLDQ). In terms of domain architecture, bZIP spans 44–107 (DQKTLRRLAQ…SSGDQAHSTG (64 aa)). 2 coiled-coil regions span residues 45-142 (QKTL…HAGD) and 217-233 (INSL…ALSQ). The tract at residues 46-66 (KTLRRLAQNREAARKSRLRKK) is basic motif. Residues 72 to 86 (LENSRLKLTQLEQEL) are leucine-zipper. The region spanning 111–327 (ALAFDAEHSR…RALSSLWLAR (217 aa)) is the DOG1 domain.

The protein belongs to the bZIP family. As to quaternary structure, binds DNA as a dimer. Interacts with NPR1, NPR3 and NPR4. Interacts with GRXC9/GRX480. As to expression, expressed predominantly in roots and flowers.

Its subcellular location is the nucleus. Functionally, transcriptional activator that binds specifically to the DNA sequence 5'-TGACG-3'. Recognizes ocs elements like the as-1 motif of the cauliflower mosaic virus 35S promoter. Binding to the as-1-like cis elements mediate auxin- and salicylic acid-inducible transcription. May be involved in the induction of the systemic acquired resistance (SAR) via its interaction with NPR1. Could also bind to the Hex-motif (5'-TGACGTGG-3') another cis-acting element found in plant histone promoters. The chain is Transcription factor TGA6 (TGA6) from Arabidopsis thaliana (Mouse-ear cress).